The chain runs to 150 residues: uncharacterized protein (150 aa).

The next 3 helical transmembrane spans lie at 48 to 68 (LFLL…CFLF), 89 to 109 (VFIF…YLLP), and 123 to 143 (REVF…IFTL).

It to M.pneumoniae MPN_085 central region.

It localises to the cell membrane. This is an uncharacterized protein from Mycoplasma pneumoniae (strain ATCC 29342 / M129 / Subtype 1) (Mycoplasmoides pneumoniae).